The chain runs to 472 residues: UDP-N-acetylmuramate--L-alanine ligase (472 aa).

Position 118–124 (118–124 (GTHGKTT)) interacts with ATP.

The protein belongs to the MurCDEF family.

It localises to the cytoplasm. It catalyses the reaction UDP-N-acetyl-alpha-D-muramate + L-alanine + ATP = UDP-N-acetyl-alpha-D-muramoyl-L-alanine + ADP + phosphate + H(+). It participates in cell wall biogenesis; peptidoglycan biosynthesis. Cell wall formation. This chain is UDP-N-acetylmuramate--L-alanine ligase, found in Methylococcus capsulatus (strain ATCC 33009 / NCIMB 11132 / Bath).